A 327-amino-acid chain; its full sequence is Endo-1,4-beta-xylanase A (327 aa).

Residues 1 to 323 enclose the GH10 domain; sequence AASGLEAAMK…KPSYTSTLNT (323 aa). A disulfide bridge links Cys-81 with Cys-123. The N-linked (GlcNAc...) asparagine glycan is linked to Asn-101. Glu-131 functions as the Proton donor in the catalytic mechanism. The active-site Nucleophile is the Glu-245. An intrachain disulfide couples Cys-273 to Cys-279.

It belongs to the glycosyl hydrolase 10 (cellulase F) family. Monomer.

The protein resides in the secreted. Its subcellular location is the extracellular space. It catalyses the reaction Endohydrolysis of (1-&gt;4)-beta-D-xylosidic linkages in xylans.. It functions in the pathway glycan degradation; xylan degradation. Catalyzes the hydrolysis of the internal glycosidic bonds in heteroxylans, releasing mainly xylobiose and xylotriose. Most active on oat-spelt xylan. The chain is Endo-1,4-beta-xylanase A from Fusarium oxysporum f. sp. lycopersici (strain 4287 / CBS 123668 / FGSC 9935 / NRRL 34936) (Fusarium vascular wilt of tomato).